Reading from the N-terminus, the 209-residue chain is Cytochrome bo(3) ubiquinol oxidase subunit 3 (209 aa).

The Cytoplasmic portion of the chain corresponds to M1 to N29. Residues T30–A50 traverse the membrane as a helical segment. The Periplasmic portion of the chain corresponds to T51 to P72. The chain crosses the membrane as a helical span at residues Y73–L93. At S94–Q102 the chain is on the cytoplasmic side. Residues A103–N123 traverse the membrane as a helical segment. The Periplasmic portion of the chain corresponds to E124–S143. Residues F144–V164 form a helical membrane-spanning segment. Residues L165 to S186 are Cytoplasmic-facing. The chain crosses the membrane as a helical span at residues L187–G207. The Periplasmic segment spans residues A208–L209.

The protein belongs to the cytochrome c oxidase subunit 3 family. Heterooctamer of two A chains, two B chains, two C chains and two D chains.

It localises to the cell inner membrane. In terms of biological role, cytochrome bo(3) ubiquinol terminal oxidase is the component of the aerobic respiratory chain of E.coli that predominates when cells are grown at high aeration. Has proton pump activity across the membrane in addition to electron transfer, pumping 2 protons/electron. In Pseudomonas aeruginosa (strain ATCC 15692 / DSM 22644 / CIP 104116 / JCM 14847 / LMG 12228 / 1C / PRS 101 / PAO1), this protein is Cytochrome bo(3) ubiquinol oxidase subunit 3 (cyoC).